A 294-amino-acid chain; its full sequence is Small ribosomal subunit biogenesis GTPase RsgA 2, mitochondrial (294 aa).

Residues 1–68 constitute a mitochondrion transit peptide; the sequence is MQTFSSAAAL…RSFLAPVLPL (68 aa). The CP-type G domain maps to 155 to 294; sequence VSEVLDPPVA…VSFFLSYFIL (140 aa). Position 255–263 (255–263) interacts with GTP; it reads GPSGVGKSS.

Belongs to the TRAFAC class YlqF/YawG GTPase family.

It localises to the mitochondrion. This chain is Small ribosomal subunit biogenesis GTPase RsgA 2, mitochondrial, found in Arabidopsis thaliana (Mouse-ear cress).